A 136-amino-acid chain; its full sequence is Sec-independent protein translocase protein TatB (136 aa).

A helical transmembrane segment spans residues 1 to 21 (MFDIGFPELALVAVIGLLVLG). The interval 89-136 (YEDMVEKNPATPMSSKASTPQTPSSGPDPQPVESHSHSDDASKQHDRS) is disordered. Over residues 99–115 (TPMSSKASTPQTPSSGP) the composition is skewed to polar residues. Basic and acidic residues predominate over residues 122–136 (SHSHSDDASKQHDRS).

This sequence belongs to the TatB family. In terms of assembly, the Tat system comprises two distinct complexes: a TatABC complex, containing multiple copies of TatA, TatB and TatC subunits, and a separate TatA complex, containing only TatA subunits. Substrates initially bind to the TatABC complex, which probably triggers association of the separate TatA complex to form the active translocon.

It localises to the cell inner membrane. Its function is as follows. Part of the twin-arginine translocation (Tat) system that transports large folded proteins containing a characteristic twin-arginine motif in their signal peptide across membranes. Together with TatC, TatB is part of a receptor directly interacting with Tat signal peptides. TatB may form an oligomeric binding site that transiently accommodates folded Tat precursor proteins before their translocation. The polypeptide is Sec-independent protein translocase protein TatB (Hahella chejuensis (strain KCTC 2396)).